A 248-amino-acid polypeptide reads, in one-letter code: Probable transcriptional regulatory protein PSPA7_4544 (248 aa).

The protein belongs to the TACO1 family.

The protein localises to the cytoplasm. This is Probable transcriptional regulatory protein PSPA7_4544 from Pseudomonas paraeruginosa (strain DSM 24068 / PA7) (Pseudomonas aeruginosa (strain PA7)).